A 100-amino-acid chain; its full sequence is Integration host factor subunit beta (100 aa).

A disordered region spans residues 81–100; sequence KPGKELRDRVNEDEHEEAHT. The segment covering 82-100 has biased composition (basic and acidic residues); the sequence is PGKELRDRVNEDEHEEAHT.

The protein belongs to the bacterial histone-like protein family. In terms of assembly, heterodimer of an alpha and a beta chain.

In terms of biological role, this protein is one of the two subunits of integration host factor, a specific DNA-binding protein that functions in genetic recombination as well as in transcriptional and translational control. This chain is Integration host factor subunit beta (ihfB), found in Pseudomonas putida (Arthrobacter siderocapsulatus).